Reading from the N-terminus, the 200-residue chain is Putative HTH-type transcriptional regulator YhjB (200 aa).

One can recognise an HTH luxR-type domain in the interval 135–200; that stretch reads DIKDLKSLSA…QAAMMLNISS (66 aa). The H-T-H motif DNA-binding region spans 159-178; that stretch reads NKEIGRALNISTGTVKAHLE.

This chain is Putative HTH-type transcriptional regulator YhjB (yhjB), found in Escherichia coli (strain K12).